Consider the following 554-residue polypeptide: Protein PNS1 (554 aa).

2 stretches are compositionally biased toward low complexity: residues Met1 to Asn19 and Ser27 to Tyr45. The tract at residues Met1–Ser90 is disordered. Topologically, residues Met1–Trp105 are cytoplasmic. The span at Pro68–Ser90 shows a compositional bias: pro residues. The chain crosses the membrane as a helical span at residues Trp106–Ile126. At His127 to Thr153 the chain is on the extracellular side. Asn132 and Asn137 each carry an N-linked (GlcNAc...) asparagine glycan. The helical transmembrane segment at Ile154–Met174 threads the bilayer. At Ala175–Gln181 the chain is on the cytoplasmic side. The helical transmembrane segment at Phe182 to Leu202 threads the bilayer. The Extracellular portion of the chain corresponds to Ser203–Tyr206. Residues Trp207–Cys227 form a helical membrane-spanning segment. The Cytoplasmic segment spans residues Arg228–Ser255. Residues Ala256–Val276 traverse the membrane as a helical segment. Residues Tyr277–Ser297 are Extracellular-facing. A helical membrane pass occupies residues Gly298–Leu318. Residues Lys319 to Ser352 are Cytoplasmic-facing. Residues Leu353 to Ile373 traverse the membrane as a helical segment. Topologically, residues Arg374–Asp389 are extracellular. The chain crosses the membrane as a helical span at residues Ile390 to Val410. The Cytoplasmic segment spans residues Glu411–Cys451. Residues Leu452 to Ala472 form a helical membrane-spanning segment. At Tyr473–Gly487 the chain is on the extracellular side. The chain crosses the membrane as a helical span at residues Gly488 to Phe508. The Cytoplasmic segment spans residues Thr509–Ala554.

This sequence belongs to the CTL (choline transporter-like) family.

Its subcellular location is the cell membrane. Functionally, probably involved in transport through the plasma membrane. This is Protein PNS1 (pns-1) from Neurospora crassa (strain ATCC 24698 / 74-OR23-1A / CBS 708.71 / DSM 1257 / FGSC 987).